The following is a 503-amino-acid chain: Nondiscriminating glutamyl-tRNA synthetase EARS2, mitochondrial (503 aa).

The N-terminal 22 residues, 1 to 22, are a transit peptide targeting the mitochondrion; that stretch reads MKILRGVSRQMCTSRPEVRVRF. An L-glutamate-binding site is contributed by 21 to 23; it reads RFA. The short motif at 26-34 is the 'HIGH' region element; the sequence is PTGFLHLGG. Position 31 (His31) interacts with ATP. Residues Glu57, 209–213, and Arg227 each bind L-glutamate; that span reads YHLAS. Residues Glu230 and 265–269 each bind ATP; that span reads KLSKR. The 'KMSKS' region motif lies at 265–269; sequence KLSKR.

The protein belongs to the class-I aminoacyl-tRNA synthetase family. Glutamate--tRNA ligase type 1 subfamily.

Its subcellular location is the mitochondrion matrix. The enzyme catalyses tRNA(Glx) + L-glutamate + ATP = L-glutamyl-tRNA(Glx) + AMP + diphosphate. It catalyses the reaction tRNA(Glu) + L-glutamate + ATP = L-glutamyl-tRNA(Glu) + AMP + diphosphate. The catalysed reaction is tRNA(Gln) + L-glutamate + ATP = L-glutamyl-tRNA(Gln) + AMP + diphosphate. Non-discriminating glutamyl-tRNA synthetase that catalyzes aminoacylation of both mitochondrial tRNA(Glu) and tRNA(Gln) and participates in RNA aminoacylation for mitochondrial protein translation. Attachs glutamate to tRNA(Glu) or tRNA(Gln) in a two-step reaction: glutamate is first activated by ATP to form Glu-AMP and then transferred to the acceptor end of tRNA(Glu) or tRNA(Gln). This Danio rerio (Zebrafish) protein is Nondiscriminating glutamyl-tRNA synthetase EARS2, mitochondrial.